The chain runs to 132 residues: Small ribosomal subunit protein uS8 (132 aa).

The protein belongs to the universal ribosomal protein uS8 family. Part of the 30S ribosomal subunit. Contacts proteins S5 and S12.

Its function is as follows. One of the primary rRNA binding proteins, it binds directly to 16S rRNA central domain where it helps coordinate assembly of the platform of the 30S subunit. The sequence is that of Small ribosomal subunit protein uS8 from Psychrobacter cryohalolentis (strain ATCC BAA-1226 / DSM 17306 / VKM B-2378 / K5).